A 711-amino-acid polypeptide reads, in one-letter code: Tyrosine-protein phosphatase 2 (711 aa).

Positions 21–130 (TESVSWIIDL…FASSHPDAIV (110 aa)) constitute a Rhodanese domain. 2 disordered regions span residues 275–306 (APQQTPARPSLRSVPSYPSSNNQRRPSASRVR) and 329–376 (IIPR…RANK). Polar residues-rich tracts occupy residues 290 to 306 (SYPSSNNQRRPSASRVR) and 340 to 363 (NAQNDGTSTMTSKLKPSVGLSNTR). In terms of domain architecture, Tyrosine-protein phosphatase spans 433 to 698 (EMTRSLAFND…KFLYDVVDYL (266 aa)). Residue cysteine 630 is the Phosphocysteine intermediate of the active site.

This sequence belongs to the protein-tyrosine phosphatase family. Non-receptor class subfamily.

The protein resides in the cytoplasm. It catalyses the reaction O-phospho-L-tyrosyl-[protein] + H2O = L-tyrosyl-[protein] + phosphate. Functionally, plays a role in inhibiting the onset of mitosis. Dephosphorylates sty1/spc1 and wis1/spc2/sty2. The chain is Tyrosine-protein phosphatase 2 (pyp2) from Schizosaccharomyces pombe (strain 972 / ATCC 24843) (Fission yeast).